We begin with the raw amino-acid sequence, 216 residues long: MSSQSSPISLTNNDLEISSNNNKPIIKQLPVPTNEIEKPVIQNIVATVELDCTINLQDVVRRVRNAEYNPKRFGALIIRITNPKTTALVFHSGKLVVTGGKTVDDSRLAGRKYARILQRLGYNVKFNHFKIQNVVASCDMKFAISLKELIQLAPKITKYEPEIFPGVVYRLADPKMVLLIFASGKIVFTGGKEIEQINKAFSEIYKILLQVANNDN.

A run of 2 repeats spans residues 38-121 (KPVI…QRLG) and 126-210 (FNHF…ILLQ).

Belongs to the TBP family.

The protein resides in the nucleus. Its function is as follows. TATA box-binding transcription factor. Members of the TBP family are differentially required to regulate transcription and development during early embryogenesis. The sequence is that of TATA-box-binding protein-like 1 (trf1) from Entamoeba histolytica (strain ATCC 30459 / HM-1:IMSS / ABRM).